We begin with the raw amino-acid sequence, 948 residues long: Protein translocase subunit SecA (948 aa).

ATP is bound by residues Gln90, 108–112 (GEGKT), and Asp509.

Belongs to the SecA family. As to quaternary structure, monomer and homodimer. Part of the essential Sec protein translocation apparatus which comprises SecA, SecYEG and auxiliary proteins SecDF. Other proteins may also be involved.

The protein localises to the cell inner membrane. The protein resides in the cellular thylakoid membrane. Its subcellular location is the cytoplasm. The catalysed reaction is ATP + H2O + cellular proteinSide 1 = ADP + phosphate + cellular proteinSide 2.. In terms of biological role, part of the Sec protein translocase complex. Interacts with the SecYEG preprotein conducting channel. Has a central role in coupling the hydrolysis of ATP to the transfer of proteins into and across the cell membrane, serving as an ATP-driven molecular motor driving the stepwise translocation of polypeptide chains across the membrane. Functionally, probably participates in protein translocation into and across both the cytoplasmic and thylakoid membranes in cyanobacterial cells. This Prochlorococcus marinus (strain MIT 9313) protein is Protein translocase subunit SecA.